Consider the following 285-residue polypeptide: Probable adenylate kinase 6, chloroplastic (285 aa).

The N-terminal 33 residues, 1–33 (MAAISRAIRACAAAGSRRSMASSAKEVAAAGAR), are a transit peptide targeting the chloroplast. ATP is bound at residue 63 to 68 (GVGKGT). The NMP stretch occupies residues 83–112 (ATGDLVRDALASPGPFSEQLAEIVNNGKLV). Residues Thr84, Arg89, 110-112 (KLV), 140-143 (GFPR), and Gln147 contribute to the AMP site. The LID stretch occupies residues 176–224 (GRRMCSQCGGNFNVASIDMEGENGGPRMYMPPLLPPPQCESKLITRPDD). ATP-binding positions include Arg177 and 186-187 (NF). Arg221 and Arg232 together coordinate AMP.

This sequence belongs to the adenylate kinase family.

Its subcellular location is the plastid. It localises to the chloroplast. It carries out the reaction AMP + ATP = 2 ADP. Functionally, catalyzes the reversible transfer of the terminal phosphate group between ATP and AMP. Plays an important role in cellular energy homeostasis and in adenine nucleotide metabolism. The sequence is that of Probable adenylate kinase 6, chloroplastic from Oryza sativa subsp. japonica (Rice).